The primary structure comprises 183 residues: Ribosome-recycling factor (183 aa).

The protein belongs to the RRF family.

The protein localises to the cytoplasm. In terms of biological role, responsible for the release of ribosomes from messenger RNA at the termination of protein biosynthesis. May increase the efficiency of translation by recycling ribosomes from one round of translation to another. The protein is Ribosome-recycling factor of Deinococcus radiodurans (strain ATCC 13939 / DSM 20539 / JCM 16871 / CCUG 27074 / LMG 4051 / NBRC 15346 / NCIMB 9279 / VKM B-1422 / R1).